The following is a 1729-amino-acid chain: Cullin-7 (1729 aa).

Residues aspartate 350–histidine 388 are disordered. At serine 371 the chain carries Phosphoserine. The CPH domain maps to arginine 392–phenylalanine 465. Basic and acidic residues predominate over residues serine 632 to glutamate 642. Residues serine 632–arginine 654 form a disordered region. One can recognise a DOC domain in the interval proline 845 to alanine 1024. Residues valine 1373 to glutamate 1405 are disordered. Residue lysine 1607 forms a Glycyl lysine isopeptide (Lys-Gly) (interchain with G-Cter in NEDD8) linkage.

Belongs to the cullin family. In terms of assembly, component of the 3M complex, composed of core components CUL7, CCDC8 and OBSL1. Component of the Cul7-RING(FBXW8) complex consisting of CUL7, RBX1, SKP1 and FBXW8. Within the Cul7-RING(FBXW8) complex interacts with FBXW8 and RBX1, but not with SKP1. Interacts with CUL1 (via the C-terminal domain); the interaction seems to be mediated by FBXW8; it is likely specific to FBXW8, but not other F-box proteins. Interacts (via the CPH domain) with p53/TP53; the interaction preferentially involves tetrameric and dimeric p53/TP53; this interaction recruits p53/TP53 for ubiquitination by neddylated CUL1-RBX1. The CUL7-CUL9 heterodimer seems to interact specifically with p53/TP53. Interacts with FBXW8; interaction is mutually exclusive of binding to CUL9 or p53/TP53. Interacts with CUL9; leading to inhibited CUL9 activity. Interacts with OBSL1. Interacts (as part of the 3M complex) with HDAC4 and HDAC5; it is negatively regulated by ANKRA2.

The protein resides in the cytoplasm. The protein localises to the cytoskeleton. Its subcellular location is the microtubule organizing center. It is found in the centrosome. It localises to the perinuclear region. The protein resides in the golgi apparatus. The protein operates within protein modification; protein ubiquitination. In terms of biological role, core component of the 3M and Cul7-RING(FBXW8) complexes, which mediate the ubiquitination and subsequent proteasomal degradation of target proteins. Core component of the 3M complex, a complex required to regulate microtubule dynamics and genome integrity. It is unclear how the 3M complex regulates microtubules, it could act by controlling the level of a microtubule stabilizer. The Cul7-RING(FBXW8) complex alone lacks ubiquitination activity and does not promote polyubiquitination and proteasomal degradation of p53/TP53. However it mediates recruitment of p53/TP53 for ubiquitination by neddylated CUL1-RBX1. Interaction with CUL9 is required to inhibit CUL9 activity and ubiquitination of BIRC5. The Cul7-RING(FBXW8) complex also mediates ubiquitination and consequent degradation of target proteins such as GORASP1, IRS1 and MAP4K1/HPK1. Ubiquitination of GORASP1 regulates Golgi morphogenesis and dendrite patterning in brain. Mediates ubiquitination and degradation of IRS1 in a mTOR-dependent manner: the Cul7-RING(FBXW8) complex recognizes and binds IRS1 previously phosphorylated by S6 kinase (RPS6KB1 or RPS6KB2). The Cul7-RING(FBXW8) complex also mediates ubiquitination of MAP4K1/HPK1: recognizes and binds autophosphorylated MAP4K1/HPK1, leading to its degradation, thereby affecting cell proliferation and differentiation. Acts as a regulator in trophoblast cell epithelial-mesenchymal transition and placental development. While the Cul7-RING(FBXW8) and the 3M complexes are associated and involved in common processes, CUL7 and the Cul7-RING(FBXW8) complex may have additional functions. Probably plays a role in the degradation of proteins involved in endothelial proliferation and/or differentiation. The chain is Cullin-7 (CUL7) from Pongo abelii (Sumatran orangutan).